We begin with the raw amino-acid sequence, 72 residues long: Protein kish-A (72 aa).

Residues 1–26 form the signal peptide; sequence MSAIFNFQSLLTVILLLICTCAYIRS. Residues 27–53 lie on the Extracellular side of the membrane; sequence LTPSLLDKNKTGFLGIFWKCARIGERK. N35 carries N-linked (GlcNAc...) asparagine glycosylation. Residues 54 to 71 form a helical membrane-spanning segment; sequence SPYVAFCCIVMALTILFS. Residue E72 is a topological domain, cytoplasmic.

The protein belongs to the KISH family.

The protein resides in the golgi apparatus membrane. Involved in the early part of the secretory pathway. This is Protein kish-A (tmem167a) from Danio rerio (Zebrafish).